Here is a 267-residue protein sequence, read N- to C-terminus: tRNA pseudouridine synthase A (267 aa).

Asp53 functions as the Nucleophile in the catalytic mechanism. Tyr114 contacts substrate.

The protein belongs to the tRNA pseudouridine synthase TruA family. In terms of assembly, homodimer.

The catalysed reaction is uridine(38/39/40) in tRNA = pseudouridine(38/39/40) in tRNA. Formation of pseudouridine at positions 38, 39 and 40 in the anticodon stem and loop of transfer RNAs. The chain is tRNA pseudouridine synthase A from Chlamydia muridarum (strain MoPn / Nigg).